Consider the following 155-residue polypeptide: MSRQSTVEKKIDKFDPIYHNRLVNMIVNRILKHGKKSLAYRIFYQSLKKIQQKTEKNPLIVLRQAIHKLTPKLIVKSRRVSGSTYQVPIEIKNKEGKILAIRWLLESSRKRSGRNMHFKLSYEIMDAAREKGNAIRKKEEIHKMAESNKAFAHYH.

It belongs to the universal ribosomal protein uS7 family. As to quaternary structure, part of the 30S ribosomal subunit.

The protein resides in the plastid. The protein localises to the chloroplast. Functionally, one of the primary rRNA binding proteins, it binds directly to 16S rRNA where it nucleates assembly of the head domain of the 30S subunit. The polypeptide is Small ribosomal subunit protein uS7c (rps7) (Metasequoia glyptostroboides (Dawn redwood)).